A 466-amino-acid chain; its full sequence is Cysteine--tRNA ligase (466 aa).

A Zn(2+)-binding site is contributed by Cys29. Positions 31–41 (ATVQAPPHIGH) match the 'HIGH' region motif. Zn(2+)-binding residues include Cys211, His236, and Glu240. The 'KMSKS' region signature appears at 267–271 (KMSKS). Position 270 (Lys270) interacts with ATP.

It belongs to the class-I aminoacyl-tRNA synthetase family. In terms of assembly, monomer. Requires Zn(2+) as cofactor.

The protein resides in the cytoplasm. It carries out the reaction tRNA(Cys) + L-cysteine + ATP = L-cysteinyl-tRNA(Cys) + AMP + diphosphate. This is Cysteine--tRNA ligase from Thermobifida fusca (strain YX).